We begin with the raw amino-acid sequence, 147 residues long: Lysozyme C, tracheal isozyme (147 aa).

The signal sequence occupies residues Met-1–Gly-18. The region spanning Lys-19–Val-147 is the C-type lysozyme domain. Disulfide bonds link Cys-24-Cys-145, Cys-48-Cys-133, Cys-83-Cys-99, and Cys-95-Cys-113. Active-site residues include Glu-53 and Asp-71.

The protein belongs to the glycosyl hydrolase 22 family. As to quaternary structure, monomer. Trachea.

The catalysed reaction is Hydrolysis of (1-&gt;4)-beta-linkages between N-acetylmuramic acid and N-acetyl-D-glucosamine residues in a peptidoglycan and between N-acetyl-D-glucosamine residues in chitodextrins.. Lysozymes have primarily a bacteriolytic function; those in tissues and body fluids are associated with the monocyte-macrophage system and enhance the activity of immunoagents. This Bos taurus (Bovine) protein is Lysozyme C, tracheal isozyme.